Here is a 531-residue protein sequence, read N- to C-terminus: Muscarinic acetylcholine receptor M5 (531 aa).

Residues 1-28 are Extracellular-facing; that stretch reads MEGESYNESTVNGTPVNHQALERHGLWE. N7 carries an N-linked (GlcNAc...) asparagine glycan. The helical transmembrane segment at 29–52 threads the bilayer; that stretch reads VITIAVVTAVVSLMTIVGNVLVMI. Topologically, residues 53–65 are cytoplasmic; it reads SFKVNSQLKTVNN. Residues 66 to 86 traverse the membrane as a helical segment; that stretch reads YYLLSLACADLIIGIFSMNLY. The Extracellular portion of the chain corresponds to 87–103; the sequence is TTYILMGRWVLGSLACD. The cysteines at positions 102 and 182 are disulfide-linked. A helical membrane pass occupies residues 104–125; that stretch reads LWLALDYVASNASVMNLLVISF. At 126 to 145 the chain is on the cytoplasmic side; that stretch reads DRYFSITRPLTYRAKRTPKR. A helical membrane pass occupies residues 146–168; the sequence is AGIMIGLAWLVSFILWAPAILCW. Over 169 to 190 the chain is Extracellular; sequence QYLVGKRTVPPDECQIQFLSEP. The helical transmembrane segment at 191–213 threads the bilayer; that stretch reads TITFGTAIAAFYIPVSVMTILYC. The Cytoplasmic segment spans residues 214 to 442; that stretch reads RIYRETEKRT…LVKERKAAQT (229 aa). Disordered regions lie at residues 259-295 and 327-346; these read SLAQ…DWEK and EAKE…ETVV. Residues 267-287 are compositionally biased toward low complexity; that stretch reads QASWSSSRRSTSTTGKTTQAT. The span at 334 to 346 shows a compositional bias: polar residues; the sequence is KESNTQETKETVV. The helical transmembrane segment at 443 to 463 threads the bilayer; the sequence is LSAILLAFIITWTPYNIMVLV. Residues 464–477 are Extracellular-facing; that stretch reads STFCDKCVPVTLWH. The chain crosses the membrane as a helical span at residues 478 to 497; the sequence is LGYWLCYVNSTINPICYALC. Topologically, residues 498-531 are cytoplasmic; sequence NRTFRKTFKLLLLCRWKKKKVEEKLYWQGNSKLP. Phosphothreonine is present on residues T500 and T504.

The protein belongs to the G-protein coupled receptor 1 family. Muscarinic acetylcholine receptor subfamily. CHRM5 sub-subfamily.

It localises to the cell membrane. The protein resides in the postsynaptic cell membrane. The muscarinic acetylcholine receptor mediates various cellular responses, including inhibition of adenylate cyclase, breakdown of phosphoinositides and modulation of potassium channels through the action of G proteins. Primary transducing effect is Pi turnover. This chain is Muscarinic acetylcholine receptor M5 (Chrm5), found in Rattus norvegicus (Rat).